Here is a 185-residue protein sequence, read N- to C-terminus: MKFKTNKLSLNLVLASSLLAASIPAFAVTGDTDQPIHIESDQQSLDMQGNVVTFTGNVIVTQGTIKINADKVVVTRPGGEQGKEVIDGYGKPATFYQMQDNGKPVEGHASQMHYELAKDFVVLTGNAYLQQVDSNIKGDKITYLVKEQKMQAFSDKGKRVTTVLVPSQLQDKNNKGQTPAQKKGN.

Positions 1-27 are cleaved as a signal peptide; it reads MKFKTNKLSLNLVLASSLLAASIPAFA. The interval 166–185 is disordered; the sequence is PSQLQDKNNKGQTPAQKKGN.

Belongs to the LptA family. As to quaternary structure, component of the lipopolysaccharide transport and assembly complex.

The protein localises to the periplasm. Involved in the assembly of lipopolysaccharide (LPS). Required for the translocation of LPS from the inner membrane to the outer membrane. May form a bridge between the inner membrane and the outer membrane, via interactions with LptC and LptD, thereby facilitating LPS transfer across the periplasm. The chain is Lipopolysaccharide export system protein LptA from Escherichia coli O157:H7.